We begin with the raw amino-acid sequence, 157 residues long: Glycine-rich RNA-binding protein (157 aa).

Positions 6-84 (YRCFVGGLAW…RNITVNEAQS (79 aa)) constitute an RRM domain. The interval 70-157 (QELDGRNITV…YGGGGGGSRW (88 aa)) is disordered. Composition is skewed to gly residues over residues 86-138 (GSGG…GGYG) and 145-157 (DGGY…GSRW).

Functionally, may play a role in the biosynthesis and processing of heterogeneous nuclear RNA and in the maturation of specific mRNAs in response to wounding. This is Glycine-rich RNA-binding protein from Daucus carota (Wild carrot).